The chain runs to 117 residues: MQKSCGENERKPQNMPKAEEDRPLEAVPQEAEGNPQPSEEGVSQEAEGNLRGGLTQPGQGYKEDSPVRHLDPEEMIRGADELERLREEIRRVRNKFVMMHWKQRHSRSRPYPVCFRP.

2 stretches are compositionally biased toward basic and acidic residues: residues 1–24 (MQKS…DRPL) and 61–74 (YKED…DPEE). Residues 1 to 74 (MQKSCGENER…SPVRHLDPEE (74 aa)) are disordered. A coiled-coil region spans residues 73–100 (EEMIRGADELERLREEIRRVRNKFVMMH).

It belongs to the TFS-II family. TFA subfamily.

The protein resides in the nucleus. Its function is as follows. May be involved in transcriptional regulation. In Bos taurus (Bovine), this protein is Transcription elongation factor A protein-like 8 (TCEAL8).